Reading from the N-terminus, the 118-residue chain is Large ribosomal subunit protein bL17 (118 aa).

The protein belongs to the bacterial ribosomal protein bL17 family. Part of the 50S ribosomal subunit. Contacts protein L32.

This chain is Large ribosomal subunit protein bL17, found in Gemmatimonas aurantiaca (strain DSM 14586 / JCM 11422 / NBRC 100505 / T-27).